The following is a 628-amino-acid chain: 1-deoxy-D-xylulose-5-phosphate synthase (628 aa).

Thiamine diphosphate-binding positions include His77 and 118 to 120; that span reads GHS. Mg(2+) is bound at residue Asp150. Thiamine diphosphate contacts are provided by residues 151-152, Asn180, Tyr288, and Glu369; that span reads GA. Asn180 lines the Mg(2+) pocket.

It belongs to the transketolase family. DXPS subfamily. As to quaternary structure, homodimer. Mg(2+) is required as a cofactor. It depends on thiamine diphosphate as a cofactor.

The enzyme catalyses D-glyceraldehyde 3-phosphate + pyruvate + H(+) = 1-deoxy-D-xylulose 5-phosphate + CO2. It participates in metabolic intermediate biosynthesis; 1-deoxy-D-xylulose 5-phosphate biosynthesis; 1-deoxy-D-xylulose 5-phosphate from D-glyceraldehyde 3-phosphate and pyruvate: step 1/1. In terms of biological role, catalyzes the acyloin condensation reaction between C atoms 2 and 3 of pyruvate and glyceraldehyde 3-phosphate to yield 1-deoxy-D-xylulose-5-phosphate (DXP). This chain is 1-deoxy-D-xylulose-5-phosphate synthase, found in Aquifex aeolicus (strain VF5).